The chain runs to 235 residues: Glucosamine-6-phosphate deaminase (235 aa).

Asp-62 acts as the Proton acceptor; for enolization step in catalysis. Asn-128 acts as the For ring-opening step in catalysis. The active-site Proton acceptor; for ring-opening step is His-130. The active-site For ring-opening step is Glu-135.

Belongs to the glucosamine/galactosamine-6-phosphate isomerase family. NagB subfamily.

It catalyses the reaction alpha-D-glucosamine 6-phosphate + H2O = beta-D-fructose 6-phosphate + NH4(+). It participates in amino-sugar metabolism; N-acetylneuraminate degradation; D-fructose 6-phosphate from N-acetylneuraminate: step 5/5. Its function is as follows. Catalyzes the reversible isomerization-deamination of glucosamine 6-phosphate (GlcN6P) to form fructose 6-phosphate (Fru6P) and ammonium ion. This Streptococcus pneumoniae (strain JJA) protein is Glucosamine-6-phosphate deaminase.